The chain runs to 105 residues: Small ribosomal subunit protein uS10 (105 aa).

Belongs to the universal ribosomal protein uS10 family. As to quaternary structure, part of the 30S ribosomal subunit.

In terms of biological role, involved in the binding of tRNA to the ribosomes. The chain is Small ribosomal subunit protein uS10 from Bdellovibrio bacteriovorus (strain ATCC 15356 / DSM 50701 / NCIMB 9529 / HD100).